The chain runs to 316 residues: tRNA dimethylallyltransferase (316 aa).

Position 17–24 (17–24 (GPTASGKT)) interacts with ATP. Position 19–24 (19–24 (TASGKT)) interacts with substrate. Interaction with substrate tRNA stretches follow at residues 42-45 (DSAL), 166-170 (QRLSR), and 247-252 (RCVGYR).

The protein belongs to the IPP transferase family. Monomer. The cofactor is Mg(2+).

It catalyses the reaction adenosine(37) in tRNA + dimethylallyl diphosphate = N(6)-dimethylallyladenosine(37) in tRNA + diphosphate. Functionally, catalyzes the transfer of a dimethylallyl group onto the adenine at position 37 in tRNAs that read codons beginning with uridine, leading to the formation of N6-(dimethylallyl)adenosine (i(6)A). The polypeptide is tRNA dimethylallyltransferase (Salmonella newport (strain SL254)).